Here is a 203-residue protein sequence, read N- to C-terminus: Suppressor/enhancer of lin-12 protein 9 (203 aa).

An N-terminal signal peptide occupies residues 1 to 18 (MNSLTWILAVLFVTPAAS). The Lumenal portion of the chain corresponds to 19-170 (YFIHVDANEE…RNINENTNSR (152 aa)). The GOLD domain occupies 28–110 (EQCFFDRLTS…PKAVMFTVEI (83 aa)). A helical membrane pass occupies residues 171 to 191 (VVMWAAFEAFVLVGMTVGQIF). Topologically, residues 192 to 203 (YLKRFFEVRTMV) are cytoplasmic.

It belongs to the EMP24/GP25L family.

The protein localises to the cytoplasmic vesicle membrane. The protein resides in the cytoplasmic vesicle. It is found in the COPI-coated vesicle membrane. Its subcellular location is the golgi apparatus membrane. In terms of biological role, may have a role in the negative regulation of lin-12 and glp-1 transport to the cell surface. May also have a role in a quality control mechanism for endoplasmic reticulum-Golgi transport; the budding of coatomer-coated and other species of coated vesicles, could bind cargo molecules to collect them into budding vesicles. Involved in regulating the expression of proteasomal subunits such as rpt-3 in order to confer resistance to proteasomal dysfunction. The sequence is that of Suppressor/enhancer of lin-12 protein 9 (sel-9) from Caenorhabditis elegans.